Consider the following 488-residue polypeptide: Glutamyl-tRNA(Gln) amidotransferase subunit A (488 aa).

Catalysis depends on charge relay system residues Lys77 and Ser152. Residue Ser176 is the Acyl-ester intermediate of the active site.

Belongs to the amidase family. GatA subfamily. As to quaternary structure, heterotrimer of A, B and C subunits.

The catalysed reaction is L-glutamyl-tRNA(Gln) + L-glutamine + ATP + H2O = L-glutaminyl-tRNA(Gln) + L-glutamate + ADP + phosphate + H(+). Functionally, allows the formation of correctly charged Gln-tRNA(Gln) through the transamidation of misacylated Glu-tRNA(Gln) in organisms which lack glutaminyl-tRNA synthetase. The reaction takes place in the presence of glutamine and ATP through an activated gamma-phospho-Glu-tRNA(Gln). The polypeptide is Glutamyl-tRNA(Gln) amidotransferase subunit A (Streptococcus pneumoniae (strain ATCC 700669 / Spain 23F-1)).